The chain runs to 363 residues: MNKRKILVPLGDKSYEVTLEAGILNNISEELLKIGITKKRKILVISNEEISNLYGEKFLNNLKDNKFQAKMFLIKAGESYKNLKTLSEIYDVAFEFGLDRNSIIIALGGGIVGDVSGFAAATWLRGIEYIQIPTTLLSMVDSSVGGKTGVNHPKGKNLIGAFNQPKAVFIDPETLKSLPKREFSAGMAEVIKYGVIRDKELFEYLEIEKNKNELINLKNEYLIKIINSSIKTKSNVVSQDEHENGVRAILNYGHSFGHVIENLCGYGKFLHGEAISIGMNIAGKIAIEKGLWSKEELERQRILLESYDLPTEIPKINKEDVLTILMGDKKVRDGKMRFILPKEIGAVDIYDDVEDSLFLKFFS.

NAD(+) contacts are provided by residues 134–135 (TT), Lys147, and Lys156. Zn(2+)-binding residues include Glu189, His254, and His271.

The protein belongs to the sugar phosphate cyclases superfamily. Dehydroquinate synthase family. Requires Co(2+) as cofactor. The cofactor is Zn(2+). It depends on NAD(+) as a cofactor.

The protein resides in the cytoplasm. The catalysed reaction is 7-phospho-2-dehydro-3-deoxy-D-arabino-heptonate = 3-dehydroquinate + phosphate. It functions in the pathway metabolic intermediate biosynthesis; chorismate biosynthesis; chorismate from D-erythrose 4-phosphate and phosphoenolpyruvate: step 2/7. Its function is as follows. Catalyzes the conversion of 3-deoxy-D-arabino-heptulosonate 7-phosphate (DAHP) to dehydroquinate (DHQ). This is 3-dehydroquinate synthase from Prochlorococcus marinus (strain AS9601).